Reading from the N-terminus, the 132-residue chain is Small ribosomal subunit protein uS8 (132 aa).

The protein belongs to the universal ribosomal protein uS8 family. As to quaternary structure, part of the 30S ribosomal subunit. Contacts proteins S5 and S12.

Functionally, one of the primary rRNA binding proteins, it binds directly to 16S rRNA central domain where it helps coordinate assembly of the platform of the 30S subunit. The sequence is that of Small ribosomal subunit protein uS8 from Azorhizobium caulinodans (strain ATCC 43989 / DSM 5975 / JCM 20966 / LMG 6465 / NBRC 14845 / NCIMB 13405 / ORS 571).